The chain runs to 588 residues: MRSTAYLTALLSFLGATHAAPEGPRCRCTPDQSCWPSPGLWQTLNKTLSGNLVAVKPVGTVCHDPTYNGGLCDSVKGMQTDSSWRSAQPGAVQSINWETWPEKNESCYIDGPRQVPCGQGRIPLYSAVVQSPLDIQKTVRFASKYNLRLVIKNTGHDFLGRSTGPQSLQILTHNMKSINFTDNFVPEGKPDGRGIGQAVTIGAGVQLNELYEAAGKRGLTQVIGLSTTVGAAGGYIQGGGHSPLGPWKGMSTDHVLEYKVVTAGAKFVTANEYQNSDLFWALRGGGGGTFGVVTSVTLRTFKDPPTIVSQVNVTMDGKANESYWAAVEKFQAYLPTLSDGGCSGYYYMLPNVTLGPQSAAVIIAAFYYANKTDKAHVDNLYRPLFASLSSIPGINVASVSVPVSSSTEAFRSAFDQKPPRDGGGVNILGSRLFSRKLLEAPGGAANLTAALSKLDFKNLQPAIGHLVAGGQVAKNTHIQSALNPSWRKALVHLVISRDWSIDSTFAEQEKISTKLTAEEIPLLAAVEPDMGAYTNEADVNEPRFQQTFWGTNYNTLLRVKNRWDPRGLFFVRSGVGSEAWDKQGLCRA.

The first 19 residues, 1–19, serve as a signal peptide directing secretion; the sequence is MRSTAYLTALLSFLGATHA. Asn45 and Asn104 each carry an N-linked (GlcNAc...) asparagine glycan. In terms of domain architecture, FAD-binding PCMH-type spans 118 to 303; sequence GQGRIPLYSA…TSVTLRTFKD (186 aa). Residue His156 is modified to Pros-8alpha-FAD histidine. 6 N-linked (GlcNAc...) asparagine glycosylation sites follow: Asn179, Asn312, Asn320, Asn351, Asn370, and Asn446.

The protein belongs to the oxygen-dependent FAD-linked oxidoreductase family. Requires FAD as cofactor.

It localises to the secreted. This is an uncharacterized protein from Arthroderma benhamiae (strain ATCC MYA-4681 / CBS 112371) (Trichophyton mentagrophytes).